A 166-amino-acid chain; its full sequence is Large ribosomal subunit protein bL9 (166 aa).

The protein belongs to the bacterial ribosomal protein bL9 family.

In terms of biological role, binds to the 23S rRNA. This Psychrobacter arcticus (strain DSM 17307 / VKM B-2377 / 273-4) protein is Large ribosomal subunit protein bL9.